The primary structure comprises 431 residues: MPNPRPGKPSAPSLALGPSPGASPSWRAAPKASDLLGARGPGGTFQGRDLRGGAHASSSSLNPMPPSQLQLPTLPLVMVAPSGARLGPLPHLQALLQDRPHFMHQLSTVDAHARTPVLQVHPLESPAMISLTPPTTATGVFSLKARPGLPPGINVASLEWVSREPALLCTFPNPSAPRKDSTLSAVPQSSYPLLANGVCKWPGCEKVFEEPEDFLKHCQADHLLDEKGRAQCLLQREMVQSLEQQLVLEKEKLSAMQAHLAGKMALTKASSVASSDKGSCCIVAAGSQGPVVPAWSGPREAPDSLFAVRRHLWGSHGNSTFPEFLHNMDYFKFHNMRPPFTYATLIRWAILEAPEKQRTLNEIYHWFTRMFAFFRNHPATWKNAIRHNLSLHKCFVRVESEKGAVWTVDELEFRKKRSQRPSRCSNPTPGP.

Residues 1–68 (MPNPRPGKPS…SSLNPMPPSQ (68 aa)) are disordered. Residues 10 to 25 (SAPSLALGPSPGASPS) are compositionally biased toward low complexity. Serine 19 is subject to Phosphoserine; by CDK2. The residue at position 31 (lysine 31) is an N6-acetyllysine. A Nuclear export signal motif is present at residues 68–76 (QLQLPTLPL). Positions 92–96 (LQALL) match the LXXLL motif motif. The interval 106-190 (LSTVDAHART…STLSAVPQSS (85 aa)) is essential for transcriptional repressor activity and for interaction with KAT5 and HDAC7. Residues 106-198 (LSTVDAHART…SSYPLLANGV (93 aa)) are interaction with ZFP90. The segment at 149-199 (LPPGINVASLEWVSREPALLCTFPNPSAPRKDSTLSAVPQSSYPLLANGVC) is interaction with IKZF4. A C2H2-type zinc finger spans residues 197-222 (GVCKWPGCEKVFEEPEDFLKHCQADH). Residues 239–248 (VQSLEQQLVL) carry the Nuclear export signal motif. The interval 239-260 (VQSLEQQLVLEKEKLSAMQAHL) is leucine-zipper. Glycyl lysine isopeptide (Lys-Gly) (interchain with G-Cter in ubiquitin) cross-links involve residues lysine 250 and lysine 252. N6-acetyllysine; alternate occurs at positions 263 and 268. Residues lysine 263 and lysine 268 each participate in a glycyl lysine isopeptide (Lys-Gly) (interchain with G-Cter in ubiquitin); alternate cross-link. The segment at 278 to 336 (GSCCIVAAGSQGPVVPAWSGPREAPDSLFAVRRHLWGSHGNSTFPEFLHNMDYFKFHNM) is interaction with RUNX1. The segment at residues 337 to 423 (RPPFTYATLI…RKKRSQRPSR (87 aa)) is a DNA-binding region (fork-head). Lysine 393 participates in a covalent cross-link: Glycyl lysine isopeptide (Lys-Gly) (interchain with G-Cter in ubiquitin). Positions 414–417 (RKKR) match the Nuclear localization signal motif. At serine 418 the chain carries Phosphoserine. The propeptide occupies 418-431 (SQRPSRCSNPTPGP).

As to quaternary structure, homodimer. Dimerization is essential for its transcriptional regulator activity. Interacts with IKZF3. Isoform 1 (via LXXLL motif), but not isoform 2, interacts with isoform 4 of RORA (via AF-2 motif). Interacts with STUB1, HSPA8 and HSPA1A/B. Interacts with PPP1CA, PPP1CB and PPP1CG. Interacts with KAT5 and HDAC7. Interacts with HDAC9 in the absence of T-cell stimulation. Interacts with USP7. Interacts with isoform 2 of ZFP90 and can form a complex with TRIM28 in the presence of isoform 2 of ZFP90. Interacts with RUNX1. Interacts with RORC. Interacts with RELA and NFATC2. Interacts with RUNX2, RUNX3 and IKZF4. Post-translationally, polyubiquitinated, leading to its proteasomal degradation in regulatory T-cells (Treg) which is mediated by STUB1 in a HSPA1A/B-dependent manner. Deubiquitinated by USP7 and USP44; leading to increase in protein stability. In terms of processing, phosphorylation at Ser-418 regulates its transcriptional repressor activity and consequently, regulatory T-cells (Treg) suppressive function. Dephosphorylated at Ser-418 by protein phosphatase 1 (PP1) in Treg cells derived from patients with rheumatoid arthritis. Phosphorylation by CDK2 negatively regulates its transcriptional activity and protein stability. Acetylation on lysine residues stabilizes FOXP3 and promotes differentiation of T-cells into induced regulatory T-cells (iTregs) associated with suppressive functions. Acetylation is mediated by a coordinated action of KAT5 and EP300/p300 acetyltransferases: EP300/p300 is required to enhance KAT5 autoacetylation, promoting acetylation of FOXP3 by KAT5. Deacetylated by SIRT1. Post-translationally, undergoes proteolytic cleavage in activated regulatory T-cells (Treg), and can be cleaved at either the N- or C-terminal site, or at both sites.

It localises to the nucleus. The protein resides in the cytoplasm. Transcriptional regulator which is crucial for the development and inhibitory function of regulatory T-cells (Treg). Plays an essential role in maintaining homeostasis of the immune system by allowing the acquisition of full suppressive function and stability of the Treg lineage, and by directly modulating the expansion and function of conventional T-cells. Can act either as a transcriptional repressor or a transcriptional activator depending on its interactions with other transcription factors, histone acetylases and deacetylases. The suppressive activity of Treg involves the coordinate activation of many genes, including CTLA4 and TNFRSF18 by FOXP3 along with repression of genes encoding cytokines such as interleukin-2 (IL2) and interferon-gamma (IFNG). Inhibits cytokine production and T-cell effector function by repressing the activity of two key transcription factors, RELA and NFATC2. Mediates transcriptional repression of IL2 via its association with histone acetylase KAT5 and histone deacetylase HDAC7. Can activate the expression of TNFRSF18, IL2RA and CTLA4 and repress the expression of IL2 and IFNG via its association with transcription factor RUNX1. Inhibits the differentiation of IL17 producing helper T-cells (Th17) by antagonizing RORC function, leading to down-regulation of IL17 expression, favoring Treg development. Inhibits the transcriptional activator activity of RORA. Can repress the expression of IL2 and IFNG via its association with transcription factor IKZF4. The polypeptide is Forkhead box protein P3 (FOXP3) (Homo sapiens (Human)).